The primary structure comprises 706 residues: Mitochondrial intermediate peptidase, mitochondrial (706 aa).

The transit peptide at 1-29 directs the protein to the mitochondrion; that stretch reads MWKLTRRLQPHINSTRWLVRNFRNGGAGD. The interval 212–238 is disordered; that stretch reads NPTYRSTSGGSRGSTRSAHKSKQKGFR. Over residues 214-227 the composition is skewed to low complexity; it reads TYRSTSGGSRGSTR. Position 491 (histidine 491) interacts with Zn(2+). Residue glutamate 492 is part of the active site. Zn(2+) is bound by residues histidine 495 and glutamate 520.

It belongs to the peptidase M3 family. Zn(2+) serves as cofactor.

Its subcellular location is the mitochondrion. In terms of biological role, aminopeptidase which cleaves preproteins, imported into the mitochondrion, to their mature size. Could cleave both preproteins and preprotein intermediates already cleaved by the mitochondrial processing peptidase (MPP). This is Mitochondrial intermediate peptidase, mitochondrial from Arabidopsis thaliana (Mouse-ear cress).